We begin with the raw amino-acid sequence, 284 residues long: D-tagatose-1,6-bisphosphate aldolase subunit GatY (284 aa).

Aspartate 82 acts as the Proton donor in catalysis. The Zn(2+) site is built by histidine 83 and histidine 180. Glycine 181 contributes to the dihydroxyacetone phosphate binding site. Position 208 (histidine 208) interacts with Zn(2+). Dihydroxyacetone phosphate contacts are provided by residues 209 to 211 (GAS) and 230 to 233 (NVAT).

It belongs to the class II fructose-bisphosphate aldolase family. TagBP aldolase GatY subfamily. Forms a complex with GatZ. The cofactor is Zn(2+).

The catalysed reaction is D-tagatofuranose 1,6-bisphosphate = D-glyceraldehyde 3-phosphate + dihydroxyacetone phosphate. Its pathway is carbohydrate metabolism; D-tagatose 6-phosphate degradation; D-glyceraldehyde 3-phosphate and glycerone phosphate from D-tagatose 6-phosphate: step 2/2. Its function is as follows. Catalytic subunit of the tagatose-1,6-bisphosphate aldolase GatYZ, which catalyzes the reversible aldol condensation of dihydroxyacetone phosphate (DHAP or glycerone-phosphate) with glyceraldehyde 3-phosphate (G3P) to produce tagatose 1,6-bisphosphate (TBP). Requires GatZ subunit for full activity and stability. Is involved in the catabolism of galactitol. This chain is D-tagatose-1,6-bisphosphate aldolase subunit GatY, found in Escherichia coli O157:H7.